Consider the following 477-residue polypeptide: MSSGRIVQIIGAVLDVEFNRNEVPKIFDALLVDGTETTLEVQQQLGDGIVRTIAMGSTEGLKRNLPVTNTGGPISVPVGIGTLGRIMDVLGRPIDEEGPVQADERWSIHREAPSYAEQSNSTELLETGIKVIDLLCPFAKGGKVGLFGGAGVGKTVNMMELINNIALKHEGLSVFAGVGERTREGNDFYHEMQEAGVVNTEDFSKSKVAMVYGQMNEPPGNRLRVALSGLTMAEYFRDTKDPATGKGRDVLLFVDNIYRYTLAGTEVSALLGRMPSAVGYQPTLAEEMGMLQERITSTQSGSITSVQAVYVPADDLTDPSPATTFAHLDATVVLSRDIASQGIYPAVDPLDSTSRQLDPLVIGEEHYNVARGVQEVLQRYKELKDIIAILGMDELSEEDKLVVYRARKIQRFLSQPFHVAEVFTGAPGKYVPLRDTIASFKAIIAGEYDSLPEQAFYMAGGIDEVVAKAEKMKSSAA.

148 to 155 (GGAGVGKT) lines the ATP pocket.

The protein belongs to the ATPase alpha/beta chains family. F-type ATPases have 2 components, CF(1) - the catalytic core - and CF(0) - the membrane proton channel. CF(1) has five subunits: alpha(3), beta(3), gamma(1), delta(1), epsilon(1). CF(0) has three main subunits: a(1), b(2) and c(9-12). The alpha and beta chains form an alternating ring which encloses part of the gamma chain. CF(1) is attached to CF(0) by a central stalk formed by the gamma and epsilon chains, while a peripheral stalk is formed by the delta and b chains.

The protein resides in the cell inner membrane. It catalyses the reaction ATP + H2O + 4 H(+)(in) = ADP + phosphate + 5 H(+)(out). Produces ATP from ADP in the presence of a proton gradient across the membrane. The catalytic sites are hosted primarily by the beta subunits. The sequence is that of ATP synthase subunit beta from Psychrobacter cryohalolentis (strain ATCC BAA-1226 / DSM 17306 / VKM B-2378 / K5).